We begin with the raw amino-acid sequence, 33 residues long: Cecropin-B (33 aa).

5-hydroxylysine is present on Lys-21.

Monomer. In terms of tissue distribution, hemolymph.

It is found in the secreted. Cecropins have lytic and antibacterial activity against several Gram-positive and Gram-negative bacteria. Also has activity against fungi. In Heliothis virescens (Tobacco budworm moth), this protein is Cecropin-B.